Reading from the N-terminus, the 261-residue chain is Small ribosomal subunit protein uS3 (261 aa).

Positions 39–107 constitute a KH type-2 domain; it reads VREYLKRKLA…PVHVSIEEIR (69 aa). Residues 213–261 form a disordered region; that stretch reads QPVAEEPAADDRRPRRTPGRPDGDKPRTRTVKKVDGAADPAKRVRKAGA. Positions 221-254 are enriched in basic and acidic residues; it reads ADDRRPRRTPGRPDGDKPRTRTVKKVDGAADPAK.

The protein belongs to the universal ribosomal protein uS3 family. Part of the 30S ribosomal subunit. Forms a tight complex with proteins S10 and S14.

Functionally, binds the lower part of the 30S subunit head. Binds mRNA in the 70S ribosome, positioning it for translation. This chain is Small ribosomal subunit protein uS3, found in Dechloromonas aromatica (strain RCB).